A 332-amino-acid polypeptide reads, in one-letter code: Probable farnesyl diphosphate synthase (332 aa).

Isopentenyl diphosphate-binding residues include K75, R78, and H107. D114 and D120 together coordinate Mg(2+). R125 contacts (2E)-geranyl diphosphate. Residue R126 participates in isopentenyl diphosphate binding. (2E)-geranyl diphosphate is bound by residues K208, Q250, and K267.

The protein belongs to the FPP/GGPP synthase family. Mg(2+) is required as a cofactor.

The protein localises to the cytoplasm. It catalyses the reaction isopentenyl diphosphate + (2E)-geranyl diphosphate = (2E,6E)-farnesyl diphosphate + diphosphate. The polypeptide is Probable farnesyl diphosphate synthase (Sinorhizobium fredii (strain NBRC 101917 / NGR234)).